Reading from the N-terminus, the 130-residue chain is Small ribosomal subunit protein uS9 (130 aa).

It belongs to the universal ribosomal protein uS9 family.

The protein is Small ribosomal subunit protein uS9 of Photorhabdus laumondii subsp. laumondii (strain DSM 15139 / CIP 105565 / TT01) (Photorhabdus luminescens subsp. laumondii).